The primary structure comprises 776 residues: Conserved oligomeric Golgi complex subunit 4 (776 aa).

Phosphoserine occurs at positions 342 and 345.

This sequence belongs to the COG4 family. In terms of assembly, component of the conserved oligomeric Golgi complex which is composed of eight different subunits and is required for normal Golgi morphology and localization.

The protein resides in the golgi apparatus membrane. In terms of biological role, required for normal Golgi function. The sequence is that of Conserved oligomeric Golgi complex subunit 4 from Drosophila melanogaster (Fruit fly).